Here is a 288-residue protein sequence, read N- to C-terminus: Homoserine kinase (288 aa).

79–89 (PPARGLGSSSA) serves as a coordination point for ATP.

This sequence belongs to the GHMP kinase family. Homoserine kinase subfamily.

Its subcellular location is the cytoplasm. The catalysed reaction is L-homoserine + ATP = O-phospho-L-homoserine + ADP + H(+). It functions in the pathway amino-acid biosynthesis; L-threonine biosynthesis; L-threonine from L-aspartate: step 4/5. Catalyzes the ATP-dependent phosphorylation of L-homoserine to L-homoserine phosphate. In Listeria monocytogenes serovar 1/2a (strain ATCC BAA-679 / EGD-e), this protein is Homoserine kinase.